The primary structure comprises 409 residues: Glycosyltransferase GtfE (409 aa).

Belongs to the glycosyltransferase 28 family.

Its pathway is antibiotic biosynthesis; vancomycin biosynthesis. D-glucosyltransferase that acts on the aglycone core, transferring D-glucose to the phenolic hydroxyl of OH-Phegly(4) to form a devancoaminyl-vancomycin (DVV) intermediate in the biosynthesis of glycopeptide antibiotic vancomycin. Also able to glycosylate A47934, an antibiotic with a teicoplanin-like heptapeptide, but lacking sugar residues. The protein is Glycosyltransferase GtfE (gtfE) of Amycolatopsis orientalis (Nocardia orientalis).